We begin with the raw amino-acid sequence, 355 residues long: Fructose-1,6-bisphosphatase class 1 (355 aa).

Residues Glu-90, Asp-109, Leu-111, and Asp-112 each coordinate Mg(2+). Substrate is bound by residues 112 to 115 (DGSS), Asn-204, and 256 to 258 (YLY). Glu-276 provides a ligand contact to Mg(2+).

The protein belongs to the FBPase class 1 family. Homotetramer. Mg(2+) is required as a cofactor.

It localises to the cytoplasm. The catalysed reaction is beta-D-fructose 1,6-bisphosphate + H2O = beta-D-fructose 6-phosphate + phosphate. It participates in carbohydrate biosynthesis; gluconeogenesis. The polypeptide is Fructose-1,6-bisphosphatase class 1 (Acidiphilium cryptum (strain JF-5)).